A 271-amino-acid polypeptide reads, in one-letter code: Formamidopyrimidine-DNA glycosylase (271 aa).

Pro2 acts as the Schiff-base intermediate with DNA in catalysis. The Proton donor role is filled by Glu3. The active-site Proton donor; for beta-elimination activity is the Lys58. DNA contacts are provided by His92, Arg111, and Arg152. An FPG-type zinc finger spans residues 237–271 (YVYGKVQKPCRICNNIITLIRQNGRSTYFCNACQN). Arg261 functions as the Proton donor; for delta-elimination activity in the catalytic mechanism.

It belongs to the FPG family. As to quaternary structure, monomer. Requires Zn(2+) as cofactor.

The catalysed reaction is Hydrolysis of DNA containing ring-opened 7-methylguanine residues, releasing 2,6-diamino-4-hydroxy-5-(N-methyl)formamidopyrimidine.. It carries out the reaction 2'-deoxyribonucleotide-(2'-deoxyribose 5'-phosphate)-2'-deoxyribonucleotide-DNA = a 3'-end 2'-deoxyribonucleotide-(2,3-dehydro-2,3-deoxyribose 5'-phosphate)-DNA + a 5'-end 5'-phospho-2'-deoxyribonucleoside-DNA + H(+). Its function is as follows. Involved in base excision repair of DNA damaged by oxidation or by mutagenic agents. Acts as a DNA glycosylase that recognizes and removes damaged bases. Has a preference for oxidized purines, such as 7,8-dihydro-8-oxoguanine (8-oxoG). Has AP (apurinic/apyrimidinic) lyase activity and introduces nicks in the DNA strand. Cleaves the DNA backbone by beta-delta elimination to generate a single-strand break at the site of the removed base with both 3'- and 5'-phosphates. This Wolbachia pipientis subsp. Culex pipiens (strain wPip) protein is Formamidopyrimidine-DNA glycosylase.